The following is a 491-amino-acid chain: UDP-N-acetylmuramate--L-alanine ligase (491 aa).

115–121 (GTHGKTT) contacts ATP.

This sequence belongs to the MurCDEF family.

The protein resides in the cytoplasm. The catalysed reaction is UDP-N-acetyl-alpha-D-muramate + L-alanine + ATP = UDP-N-acetyl-alpha-D-muramoyl-L-alanine + ADP + phosphate + H(+). It participates in cell wall biogenesis; peptidoglycan biosynthesis. Functionally, cell wall formation. This Parvibaculum lavamentivorans (strain DS-1 / DSM 13023 / NCIMB 13966) protein is UDP-N-acetylmuramate--L-alanine ligase.